The primary structure comprises 410 residues: Putative F-box/kelch-repeat protein At1g15680 (410 aa).

In terms of domain architecture, F-box spans 13–58 (CKRRIELPEELLAEIVARLPFISITRFKSVCKGWRSLIESTYFRHL). Kelch repeat units lie at residues 177-227 (VVCM…SLKK) and 274-327 (AYTT…YFPV).

This chain is Putative F-box/kelch-repeat protein At1g15680, found in Arabidopsis thaliana (Mouse-ear cress).